A 640-amino-acid chain; its full sequence is Uromodulin (640 aa).

Residues 1–24 (MGQPSLTWMLMVVVASWFITTAAT) form the signal peptide. The region spanning 28 to 64 (EARWCSECHSNATCTEDEAVTTCTCQEGFTGDGLTCV) is the EGF-like 1 domain. 21 disulfides stabilise this stretch: C32–C41, C35–C50, C52–C63, C69–C83, C77–C92, C94–C106, C112–C126, C120–C135, C137–C148, C150–C161, C155–C170, C174–C267, C195–C282, C217–C255, C223–C287, C248–C256, C297–C306, C300–C315, C317–C347, C335–C425, and C366–C389. N-linked (GlcNAc...) asparagine glycosylation is present at N38. One can recognise an EGF-like 2; calcium-binding domain in the interval 65-107 (DLDECAIPGAHNCSANSSCVNTPGSFSCVCPEGFRLSPGLGCT). Residues N76 and N80 are each glycosylated (N-linked (GlcNAc...) asparagine). The region spanning 108–149 (DVDECAEPGLSHCHALATCVNVVGSYLCVCPAGYRGDGWHCE) is the EGF-like 3; calcium-binding domain. Residues 150–171 (CSPGSCGPGLDCVPEGDALVCA) form a beta hairpin region. The tract at residues 172–291 (DPCQAHRTLD…CHLAYCTDPS (120 aa)) is D10C. N232 is a glycosylation site (N-linked (GlcNAc...) (complex) asparagine). A glycan (N-linked (GlcNAc...) (high mannose) asparagine) is linked at N275. One can recognise an EGF-like 4 domain in the interval 292–323 (SVEGTCEECSIDEDCKSNNGRWHCQCKQDFNI). A glycan (N-linked (GlcNAc...) (complex) asparagine) is linked at N322. The interval 334-429 (ECGANDMKVS…KINFACSYPL (96 aa)) is ZP-N. The ZP domain maps to 334–589 (ECGANDMKVS…PTCSGTRFRS (256 aa)). The N-linked (GlcNAc...) (complex) asparagine glycan is linked to N396. The flexible ZP-N/ZP-C linker; important for secretion and polymerization into filaments stretch occupies residues 430–453 (DMKVSLKTALQPMVSALNIRVGGT). An internal hydrophobic patch (IHP) region spans residues 454-465 (GMFTVRMALFQT). Positions 454-589 (GMFTVRMALF…PTCSGTRFRS (136 aa)) are ZP-C. Cystine bridges form between C506/C566, C527/C582, and C571/C578. An N-linked (GlcNAc...) (complex) asparagine; alternate glycan is attached at N513. N-linked (GlcNAc...) (high mannose) asparagine; alternate glycosylation is present at N513. The essential for cleavage by HPN stretch occupies residues 586–589 (RFRS). Residues 598-606 (VLNLGPITR) are external hydrophobic patch (EHP); regulates polymerization into filaments. Residue S614 is the site of GPI-anchor amidated serine attachment. The propeptide at 615–640 (RAFSSLGLLKVWLPLLLSATLTLTFQ) is removed in mature form.

In terms of assembly, homodimer that then polymerizes into long filaments. The filaments can additionally assemble laterally to form a sheet. The filaments consist of a zigzag-shaped backbone with laterally protruding arms which interact with bacterial adhesin fimH. Two fimH molecules can bind to a single UMOD monomer. Post-translationally, N-glycosylated. N-glycan heterogeneity at Asn-232: Hex7HexNAc6 (major) and dHex1Hex7HexNAc6 (minor); at Asn-322: dHex1Hex6HexNAc5 (minor), dHex1Hex7HexNAc6 (major) and dHex1Hex8HexNAc7 (minor); at Asn-396: Hex6HexNAc5 (major), dHex1Hex6HexNAc5 (minor) and Hex7HexNAc6 (minor). Glycosylated Asn-232 interacts with E.coli adhesin fimH. Other complex glycosylation sites may serve as binding sites for proteins from other bacteria inclduding K.pneumoniae, P.aeruginosa and S.mitis. Proteolytically cleaved at a conserved C-terminal proteolytic cleavage site to generate the secreted form found in urine. This cleavage is catalyzed by HPN. In terms of tissue distribution, expressed in the tubular cells of the kidney. Most abundant protein in normal urine (at protein level). Synthesized exclusively in the kidney. Expressed exclusively by epithelial cells of the thick ascending limb of Henle's loop (TALH) and of distal convoluted tubule lumen.

It localises to the apical cell membrane. The protein localises to the basolateral cell membrane. Its subcellular location is the cell projection. It is found in the cilium membrane. The protein resides in the secreted. Functionally, functions in biogenesis and organization of the apical membrane of epithelial cells of the thick ascending limb of Henle's loop (TALH), where it promotes formation of complex filamentous gel-like structure that may play a role in the water barrier permeability. May serve as a receptor for binding and endocytosis of cytokines (IL-1, IL-2) and TNF. Facilitates neutrophil migration across renal epithelia. Its function is as follows. In the urine, may contribute to colloid osmotic pressure, retards passage of positively charged electrolytes, and inhibits formation of liquid containing supersaturated salts and subsequent formation of salt crystals. Protects against urinary tract infections by binding to type 1 fimbriated E.coli. Binds to bacterial adhesin fimH which mediates the stable formation of bacterial aggregates, prevents the binding of E.coli to uroplakins UPK1A and UPK1B which act as urothelial receptors for type I fimbriae, and allows for pathogen clearance through micturation. Also promotes aggregation of other bacteria including K.pneumoniae, P.aeruginosa and S.mitis and so may also protect against other uropathogens. The chain is Uromodulin (UMOD) from Homo sapiens (Human).